The sequence spans 97 residues: Exodeoxyribonuclease 7 small subunit (97 aa).

The segment at 1 to 22 is disordered; that stretch reads MAKTASPGATPPDNGTEPLPDN.

It belongs to the XseB family. As to quaternary structure, heterooligomer composed of large and small subunits.

The protein localises to the cytoplasm. It catalyses the reaction Exonucleolytic cleavage in either 5'- to 3'- or 3'- to 5'-direction to yield nucleoside 5'-phosphates.. Its function is as follows. Bidirectionally degrades single-stranded DNA into large acid-insoluble oligonucleotides, which are then degraded further into small acid-soluble oligonucleotides. This chain is Exodeoxyribonuclease 7 small subunit, found in Burkholderia ambifaria (strain MC40-6).